We begin with the raw amino-acid sequence, 147 residues long: Transcription antitermination protein NusB (147 aa).

It belongs to the NusB family.

In terms of biological role, involved in transcription antitermination. Required for transcription of ribosomal RNA (rRNA) genes. Binds specifically to the boxA antiterminator sequence of the ribosomal RNA (rrn) operons. The protein is Transcription antitermination protein NusB of Teredinibacter turnerae (strain ATCC 39867 / T7901).